We begin with the raw amino-acid sequence, 144 residues long: Ig heavy chain V region MOPC 141 (144 aa).

The N-terminal stretch at 1-19 (MAVLALLFCLATFPSCILS) is a signal peptide. An Ig-like domain is found at 20–130 (QVQLKESGPG…YYGRSDKYFT (111 aa)).

This Mus musculus (Mouse) protein is Ig heavy chain V region MOPC 141.